A 314-amino-acid chain; its full sequence is Acetyl-coenzyme A carboxylase carboxyl transferase subunit alpha (314 aa).

One can recognise a CoA carboxyltransferase C-terminal domain in the interval 32–289 (EIDMLEASLE…KSAFVAQLDS (258 aa)).

The protein belongs to the AccA family. As to quaternary structure, acetyl-CoA carboxylase is a heterohexamer composed of biotin carboxyl carrier protein (AccB), biotin carboxylase (AccC) and two subunits each of ACCase subunit alpha (AccA) and ACCase subunit beta (AccD).

The protein localises to the cytoplasm. The catalysed reaction is N(6)-carboxybiotinyl-L-lysyl-[protein] + acetyl-CoA = N(6)-biotinyl-L-lysyl-[protein] + malonyl-CoA. It functions in the pathway lipid metabolism; malonyl-CoA biosynthesis; malonyl-CoA from acetyl-CoA: step 1/1. In terms of biological role, component of the acetyl coenzyme A carboxylase (ACC) complex. First, biotin carboxylase catalyzes the carboxylation of biotin on its carrier protein (BCCP) and then the CO(2) group is transferred by the carboxyltransferase to acetyl-CoA to form malonyl-CoA. This is Acetyl-coenzyme A carboxylase carboxyl transferase subunit alpha from Staphylococcus aureus (strain JH9).